A 300-amino-acid polypeptide reads, in one-letter code: HTH-type transcriptional regulator ArgP (300 aa).

Residues 4-60 (PDYRTLQALDAVIRERGFERAAQKLCITQSAVSQRIKQLENLFGQPLLVRTVPPRPT) enclose the HTH lysR-type domain. Positions 21–40 (FERAAQKLCITQSAVSQRIK) form a DNA-binding region, H-T-H motif.

Belongs to the LysR transcriptional regulatory family. Homodimer.

In terms of biological role, controls the transcription of genes involved in arginine and lysine metabolism. This chain is HTH-type transcriptional regulator ArgP, found in Photorhabdus laumondii subsp. laumondii (strain DSM 15139 / CIP 105565 / TT01) (Photorhabdus luminescens subsp. laumondii).